Reading from the N-terminus, the 370-residue chain is Heme A synthase (370 aa).

A run of 8 helical transmembrane segments spans residues 15-35 (VRIW…VGGA), 104-124 (VIGI…AIGP), 129-149 (ALWI…WMVA), 161-181 (VRLA…VWTL), 200-220 (ALAL…VAGL), 261-280 (QFDH…LHMI), 293-313 (GAVL…FTVL), and 317-337 (PIDL…LAVL). His264 lines the heme pocket. His324 is a heme binding site.

Belongs to the COX15/CtaA family. Type 2 subfamily. As to quaternary structure, interacts with CtaB. Heme b serves as cofactor.

It is found in the cell membrane. The catalysed reaction is Fe(II)-heme o + 2 A + H2O = Fe(II)-heme a + 2 AH2. The protein operates within porphyrin-containing compound metabolism; heme A biosynthesis; heme A from heme O: step 1/1. Functionally, catalyzes the conversion of heme O to heme A by two successive hydroxylations of the methyl group at C8. The first hydroxylation forms heme I, the second hydroxylation results in an unstable dihydroxymethyl group, which spontaneously dehydrates, resulting in the formyl group of heme A. The chain is Heme A synthase from Rhodopseudomonas palustris (strain TIE-1).